We begin with the raw amino-acid sequence, 36 residues long: U1-ectatotoxin-Et1b subunit B (36 aa).

The cysteines at positions 11 and 33 are disulfide-linked.

The protein belongs to the ectatomin family. Ectatomin-Et subfamily. As to quaternary structure, heterodimer of subunits A and B; disulfide-linked. Expressed by the venom gland.

It is found in the secreted. It localises to the target cell membrane. The polypeptide is U1-ectatotoxin-Et1b subunit B (Ectatomma tuberculatum (Selva ant)).